Here is a 243-residue protein sequence, read N- to C-terminus: Terpene cyclase paxB (243 aa).

7 consecutive transmembrane segments (helical) span residues 23-43, 49-69, 78-98, 112-132, 134-154, 172-194, and 205-225; these read FVVG…YISF, GMSI…CLVF, GVFW…ITFS, ISLI…ALAL, IGPA…LSVG, LWAS…WMYW, and LVLW…ICFW.

The protein belongs to the paxB family.

The protein localises to the membrane. The protein operates within secondary metabolite biosynthesis. In terms of biological role, terpene cyclase; part of the ATM2 gene cluster that mediates the biosynthesis of paxilline, a mycotoxin that acts as an inhibitor of mammalian maxi-K channels. PaxG, the geranylgeranyl diphosphate (GGPP) synthase is proposed to catalyze the first step in paxilline biosynthesis. Condensation of indole-3-glycerol phosphate with GGPP by paxC then forms 3-geranylgeranylindole (3-GGI), followed by epoxidation and cyclization of this intermediate (by paxM and paxB) to form paspaline. Paspaline is subsequently converted to 13-desoxypaxilline by paxP, the latter being then converted to paxilline by paxQ. Finally paxilline can be mono- and di-prenylated by paxD. The sequence is that of Terpene cyclase paxB from Penicillium paxilli.